We begin with the raw amino-acid sequence, 245 residues long: Mannose/glucose-specific lectin (245 aa).

Residues Asp87 and Gly107 each coordinate a carbohydrate. N-linked (GlcNAc...) asparagine glycosylation occurs at Asn119. Glu129 and Asp131 together coordinate Mn(2+). Positions 131 and 133 each coordinate Ca(2+). A carbohydrate contacts are provided by Ser138 and Asn139. Ca(2+)-binding residues include Asn139 and Asp142. Residues Asp142 and His147 each coordinate Mn(2+). A carbohydrate contacts are provided by Gly221, Glu222, and Gln223.

This sequence belongs to the leguminous lectin family. As to quaternary structure, homodimer.

Its function is as follows. Mannose/glucose-specific lectin that also binds derivatives N-acetyl-D-glucosamine and alpha-methyl-D-mannopyranoside with even higher affinity. Has hemagglutinating activity towards rabbit erythrocytes. Is toxic towards brine shrimp A.nauplii. In rats, induces dose-dependent paw edema. The polypeptide is Mannose/glucose-specific lectin (Centrolobium tomentosum (Arariba)).